The sequence spans 1423 residues: Fructan beta-fructosidase (1423 aa).

An N-terminal signal peptide occupies residues 1-39 (MEEETVCKNWFMRKSGKSWIFGCAVFFVLGLATALPVAA). The disordered stretch occupies residues 44 to 161 (QTTAADTAVT…TNLEDMSHDT (118 aa)). The segment covering 69–126 (AVTETTQSEGTASKQLTTPAVADQTTEPTDNEPISSSDGASSPYQVTDTTEPQQTLTP) has biased composition (polar residues). Substrate-binding positions include 455-458 (WAND), Q474, 513-514 (FS), 581-582 (RD), and D783. Residue D458 is part of the active site. An involved in binding of sugars with beta-(2,6) linkages or binding of molecular weight fructans region spans residues 867–871 (ASVEV). The BIG2 domain maps to 924–1002 (PVAMNTTTAK…SKENPSLSKT (79 aa)). The segment covering 1368 to 1385 (DVNSVQQTEPSVMSSSPK) has biased composition (polar residues). The tract at residues 1368-1394 (DVNSVQQTEPSVMSSSPKATLPDTGDH) is disordered. The LPXTG sorting signal motif lies at 1388 to 1392 (LPDTG). A Pentaglycyl murein peptidoglycan amidated threonine modification is found at T1391. Residues 1392 to 1423 (GDHKTDLSQLGVLAMIGSFLVEIAGYFKKRKD) constitute a propeptide, removed by sortase.

This sequence belongs to the glycosyl hydrolase 32 family.

It localises to the secreted. Its subcellular location is the cell wall. The enzyme catalyses Hydrolysis of terminal, non-reducing (2-&gt;1)- and (2-&gt;6)-linked beta-D-fructofuranose residues in fructans.. In terms of biological role, this protein is a fructanase enzyme which degrades levans and inulins to fructose and also cleaves sucrose into glucose and fructose and can therefore function as an extracellular invertase. This Streptococcus mutans serotype c (strain ATCC 700610 / UA159) protein is Fructan beta-fructosidase (fruA).